A 225-amino-acid polypeptide reads, in one-letter code: Two-component response regulator PhoP (225 aa).

The 115-residue stretch at 2–116 folds into the Response regulatory domain; that stretch reads KLLVVEDEAL…ELEARLNALL (115 aa). 4-aspartylphosphate is present on aspartate 51. Positions 124-222 form a DNA-binding region, ompR/PhoB-type; the sequence is QSTIEAGPLV…VRGQGYLFTE (99 aa).

In terms of biological role, member of the two-component regulatory system PhoP/PhoQ that plays a role in the regulation of resistance towards polymyxin B and cationic antimicrobial peptides in response to limiting concentrations of Mg(2+). Functions as a transcriptional activator by direct binding to a cis-acting sequence upstream of the target gene promoters including oprH and pmrH promoters. This Pseudomonas aeruginosa (strain ATCC 15692 / DSM 22644 / CIP 104116 / JCM 14847 / LMG 12228 / 1C / PRS 101 / PAO1) protein is Two-component response regulator PhoP (phoP).